The chain runs to 191 residues: Flagellar transcriptional regulator FlhC (191 aa).

Zn(2+) is bound by residues Cys137, Cys140, Cys157, and Cys160.

Belongs to the FlhC family. Heterohexamer composed of two FlhC and four FlhD subunits. Each FlhC binds a FlhD dimer, forming a heterotrimer, and a hexamer assembles by dimerization of two heterotrimers. Zn(2+) serves as cofactor.

Its subcellular location is the cytoplasm. In terms of biological role, functions in complex with FlhD as a master transcriptional regulator that regulates transcription of several flagellar and non-flagellar operons by binding to their promoter region. Activates expression of class 2 flagellar genes, including fliA, which is a flagellum-specific sigma factor that turns on the class 3 genes. Also regulates genes whose products function in a variety of physiological pathways. The chain is Flagellar transcriptional regulator FlhC from Nitrosomonas eutropha (strain DSM 101675 / C91 / Nm57).